A 484-amino-acid chain; its full sequence is Putative transporter B0252.3 (484 aa).

A run of 11 helical transmembrane segments spans residues 43-63, 95-115, 121-141, 144-164, 183-203, 208-228, 286-306, 321-341, 348-368, 373-393, and 433-453; these read ILTCILVCGLAWSPLAFTGLC, STTTFYMVGNMIGGMFIPPLA, LPVFVATVLLMAVGGMISAFS, IMMFCIMRMIHGIFYTAAGLA, VYFGVMWVVGACFLGLLAYIL, YLMFCISVPNIFVALLIYMTV, MFIVYVLVMTYIWIVDTFIYF, LNFVLMSLVEAPAYIFSPIFM, VLISGTHIIAGLSFLGIVLSS, IHFWLLGKFAISCSFMSIYMF, and LAPAITLSLIAVSGGLLTLIL.

The protein belongs to the major facilitator superfamily. Sugar transporter (TC 2.A.1.1) family.

It localises to the membrane. The sequence is that of Putative transporter B0252.3 from Caenorhabditis elegans.